A 328-amino-acid chain; its full sequence is Beta-ketoacyl-[acyl-carrier-protein] synthase III (328 aa).

Active-site residues include Cys-122 and His-255. Positions Gln-256–Arg-260 are ACP-binding. Asn-285 is a catalytic residue.

This sequence belongs to the thiolase-like superfamily. FabH family. In terms of assembly, homodimer.

It localises to the cytoplasm. The enzyme catalyses malonyl-[ACP] + acetyl-CoA + H(+) = 3-oxobutanoyl-[ACP] + CO2 + CoA. Its pathway is lipid metabolism; fatty acid biosynthesis. Its function is as follows. Catalyzes the condensation reaction of fatty acid synthesis by the addition to an acyl acceptor of two carbons from malonyl-ACP. Catalyzes the first condensation reaction which initiates fatty acid synthesis and may therefore play a role in governing the total rate of fatty acid production. Possesses both acetoacetyl-ACP synthase and acetyl transacylase activities. Its substrate specificity determines the biosynthesis of branched-chain and/or straight-chain of fatty acids. The sequence is that of Beta-ketoacyl-[acyl-carrier-protein] synthase III from Bordetella avium (strain 197N).